The chain runs to 485 residues: Kynureninase 1 (485 aa).

Pyridoxal 5'-phosphate contacts are provided by residues Leu155, Thr156, 183–186 (FPSD), Asp267, His270, and Tyr292. Lys293 is subject to N6-(pyridoxal phosphate)lysine. Trp330 and Asn358 together coordinate pyridoxal 5'-phosphate.

It belongs to the kynureninase family. In terms of assembly, homodimer. Requires pyridoxal 5'-phosphate as cofactor.

It is found in the cytoplasm. It carries out the reaction L-kynurenine + H2O = anthranilate + L-alanine + H(+). It catalyses the reaction 3-hydroxy-L-kynurenine + H2O = 3-hydroxyanthranilate + L-alanine + H(+). Its pathway is amino-acid degradation; L-kynurenine degradation; L-alanine and anthranilate from L-kynurenine: step 1/1. It participates in cofactor biosynthesis; NAD(+) biosynthesis; quinolinate from L-kynurenine: step 2/3. In terms of biological role, catalyzes the cleavage of L-kynurenine (L-Kyn) and L-3-hydroxykynurenine (L-3OHKyn) into anthranilic acid (AA) and 3-hydroxyanthranilic acid (3-OHAA), respectively. The polypeptide is Kynureninase 1 (kyn-1) (Neurospora crassa (strain ATCC 24698 / 74-OR23-1A / CBS 708.71 / DSM 1257 / FGSC 987)).